The primary structure comprises 1161 residues: MEADWDELSRIPVPAPSSHGLPTIATTIAFDDVSELLWAGNEFGRITSFYGPELQRYTSVRAHPVSDGPVRQILFHERGVISLSPKSVHMITRRGLSQWHIAHEEMTDLHCMSFTAQLNRIIVAGCQSAMFTIDIDKGVIVDKLQTDHNYTMMKKSRYLCAATDTGSVNALSLSDFQVVKSWKAHGTAINDMDARNDLLVTCGFSVRHLGSPIVDPLANVYDLKTLSPLPPIPFHAGAAYVRMHPKLHTTSFVASQTGQLQVVDLMNPNAINLRQANVSFMLGIDISPSGEALAINDAECAIHLWGSPSKVHFNEMSKEVEFADVVPRPPSLDWSPDTPLNMIGMPYYHERLFSAWPSHLVFEVGNPPASIDQSLIPYLRPAEMGHYAPNPKKTRRYQVENTRALTTAESALIAPKFLSEKAREQTRAKSEGSVSDTAEALAGAKLNGEAEDDPLLKYSNVEIKYSRFGVDDFDFRFYNQTIFSGLETHIANSFTNALLQLLKFIPLVRNLALHHAASTCIYETCLLCEMGYLFDMLEKANGQNCQATNLLKAFSSYREASNLGLLEENLTTKSLSSAIQSVNRFFLNQIAHDFRMILPSSDDLDHRLATIASESIRCMFCQNEIVRPGNSLANELIYPAIDIKQARRNPAFKFSNILRASIERETQNRGWCNYCRRYQQVTIRKTVHRMPLVLILNAALNNPLCRRLWSIPGWLPEEIGIVVEGGQVMCYEGDELKAQVQNKVPNLVLYDLVGLVAEIDIPEHQKAHLVSFINVSISSRETESKSRWHLFNDFLVTEVDKDEALRFNQPWKIPCVLAYQARDARHGVDDAWKDTLDTTLLFRDWSLNGGRPVESRQTLTEEEKPTPGTPVALDTEFVDLEKAEIDVKADGSQEIVRPNKSGLARVSVLRGSGIHEGVPFIDDYITIKEPIVDYVTQYSGIKPGDLDPRTSQHNLVPLKVAYKKLWLLLNLGCIFVGHGLASDFRKINIQVPKNQTVDTQYLYFHPGKNRRLSLRYLAWAVFKEYIQEESTDANQGHDSVEDARMALRLWKKFQEYEDAGIVNQILEEIFREGSRLGFRPPPRNGVATVLSRPGTAVTMQNNSGRNTPSTPDVGGAAAAAATTSAPATPRQAFRRSIALTPSNGTFGGPGTGDFFGGSPLK.

WD repeat units follow at residues 20 to 59 (GLPT…RYTS), 102 to 145 (AHEE…DKLQ), and 276 to 315 (ANVS…HFNE). The interval 316–452 (MSKEVEFADV…GAKLNGEAED (137 aa)) is linker. Residues 453 to 822 (DPLLKYSNVE…IPCVLAYQAR (370 aa)) enclose the USP domain. Residues 871–1049 (VALDTEFVDL…VEDARMALRL (179 aa)) form the Exonuclease domain. Residues Asp874, Glu876, Asp983, and Asp1042 each coordinate a divalent metal cation. Residues 1094–1161 (GTAVTMQNNS…GDFFGGSPLK (68 aa)) form a disordered region. Residues 1097 to 1110 (VTMQNNSGRNTPST) are compositionally biased toward polar residues. The segment covering 1116–1129 (AAAAAATTSAPATP) has biased composition (low complexity). Residues 1145–1155 (TFGGPGTGDFF) show a composition bias toward gly residues.

It belongs to the peptidase C19 family. PAN2 subfamily. As to quaternary structure, forms a heterotrimer with an asymmetric homodimer of the regulatory subunit pan3 to form the poly(A)-nuclease (PAN) deadenylation complex. The cofactor is a divalent metal cation.

The protein resides in the cytoplasm. The enzyme catalyses Exonucleolytic cleavage of poly(A) to 5'-AMP.. Positively regulated by the regulatory subunit pan3. Its function is as follows. Catalytic subunit of the poly(A)-nuclease (PAN) deadenylation complex, one of two cytoplasmic mRNA deadenylases involved in mRNA turnover. PAN specifically shortens poly(A) tails of RNA and the activity is stimulated by poly(A)-binding protein pab1. PAN deadenylation is followed by rapid degradation of the shortened mRNA tails by the CCR4-NOT complex. Deadenylated mRNAs are then degraded by two alternative mechanisms, namely exosome-mediated 3'-5' exonucleolytic degradation, or deadenylation-dependent mRNA decaping and subsequent 5'-3' exonucleolytic degradation by xrn1. May also be involved in post-transcriptional maturation of mRNA poly(A) tails. This is PAN2-PAN3 deadenylation complex catalytic subunit pan2 from Aspergillus clavatus (strain ATCC 1007 / CBS 513.65 / DSM 816 / NCTC 3887 / NRRL 1 / QM 1276 / 107).